The primary structure comprises 556 residues: Delta-1-pyrroline-5-carboxylate dehydrogenase 12A1, mitochondrial (556 aa).

NAD(+) is bound at residue 282–287; it reads GSSRVA. E301 acts as the Proton acceptor in catalysis. C336 acts as the Nucleophile in catalysis.

Belongs to the aldehyde dehydrogenase family. Highly expressed in flowers. Constitutively expressed at low levels in the other tissues. Highly expressed in pollen grains and tissues undergoing cell death. Expressed in old leaves, mature siliques and developing embryos.

The protein resides in the mitochondrion matrix. The catalysed reaction is (S)-1-pyrroline-5-carboxylate + NAD(+) + 2 H2O = L-glutamate + NADH + H(+). Its pathway is amino-acid degradation; L-proline degradation into L-glutamate; L-glutamate from L-proline: step 2/2. In terms of biological role, plays a role in the inhibition of programmed cell death by converting the toxic proline catabolism intermediate (s)-1-pyrroline-5-carboxylate (P5C) to glutamate. This Arabidopsis thaliana (Mouse-ear cress) protein is Delta-1-pyrroline-5-carboxylate dehydrogenase 12A1, mitochondrial.